A 477-amino-acid chain; its full sequence is E3 ubiquitin-protein ligase TRIM17 (477 aa).

The RING-type zinc finger occupies 16-66 (CSICLDYFTDPVMTTCGHNFCRACIQLSWEKARGKKGRRKRKGSFPCPECR). Residues 94–135 (QKQDLCQEHHEPLKLFCQKDQSPICVVCRESREHRLHRVLPA) form a B box-type zinc finger. Zn(2+) is bound by residues cysteine 99, histidine 102, cysteine 121, and histidine 127. The stretch at 135–223 (AEEAVQGYKL…TASRLRESVA (89 aa)) forms a coiled coil. Positions 277 to 475 (PRTVCRVPGQ…MVISTVTMWV (199 aa)) constitute a B30.2/SPRY domain.

This sequence belongs to the TRIM/RBCC family. In terms of assembly, interacts (via coiled coil) with TRIM44 (via coiled coil). Interacts with TRIM28; this interaction prevents TRIM28 activity on BCL2A1. Interacts with TRIM41; this interaction prevents TRIM41 activity on ZSCAN2. Interacts with BECN1. Interacts with NFATC3 and NFATC4; these interactions prevent NFATC3 and NFATC4 nuclear localization. Auto-ubiquitinated. In terms of tissue distribution, almost exclusively in the testis.

It localises to the cytoplasm. Its subcellular location is the lysosome. The enzyme catalyses S-ubiquitinyl-[E2 ubiquitin-conjugating enzyme]-L-cysteine + [acceptor protein]-L-lysine = [E2 ubiquitin-conjugating enzyme]-L-cysteine + N(6)-ubiquitinyl-[acceptor protein]-L-lysine.. The protein operates within protein modification; protein ubiquitination. In terms of biological role, E3 ubiquitin ligase that plays important roles in the regulation of neuronal apoptosis, selective autophagy or cell proliferation. Stimulates the degradation of kinetochore ZW10 interacting protein ZWINT in a proteasome-dependent manner, leading to negative regulation of cell proliferation. Inhibits autophagic degradation of diverse known targets while contributing to autophagy of midbodies. Autophagy-inhibitory activity involves MCL1, which TRIM17 assembles into complexes with the key autophagy regulator BECN1. Controls neuronal apoptosis by mediating ubiquitination and degradation of MCL1 to initiate neuronal death. In addition, regulates NFAT transcription factors NFATC3 and NFATC4 activities by preventing their nuclear localization, thus inhibiting their transcriptional activities. Decreases TRIM41-mediated degradation of ZSCAN2 thereby stimulating alpha-synuclein/SNCA transcription in neuronal cells. Prevents the E3 ubiquitin-ligase activity of TRIM28 and its interaction with anti-apoptotic BCL2A1, blocking TRIM28 from ubiquitinating BCL2A1. In Homo sapiens (Human), this protein is E3 ubiquitin-protein ligase TRIM17 (TRIM17).